Here is a 66-residue protein sequence, read N- to C-terminus: Large ribosomal subunit protein bL33c (66 aa).

It belongs to the bacterial ribosomal protein bL33 family.

It is found in the plastid. The protein localises to the chloroplast. The polypeptide is Large ribosomal subunit protein bL33c (Solanum bulbocastanum (Wild potato)).